The chain runs to 395 residues: Succinyl-diaminopimelate desuccinylase 2 (395 aa).

A Zn(2+)-binding site is contributed by His79. The active site involves Asp81. A Zn(2+)-binding site is contributed by Asp112. The Proton acceptor role is filled by Glu145. 3 residues coordinate Zn(2+): Glu146, Glu174, and His363.

It belongs to the peptidase M20A family. DapE subfamily. Homodimer. Zn(2+) is required as a cofactor. It depends on Co(2+) as a cofactor.

The catalysed reaction is N-succinyl-(2S,6S)-2,6-diaminopimelate + H2O = (2S,6S)-2,6-diaminopimelate + succinate. It functions in the pathway amino-acid biosynthesis; L-lysine biosynthesis via DAP pathway; LL-2,6-diaminopimelate from (S)-tetrahydrodipicolinate (succinylase route): step 3/3. Functionally, catalyzes the hydrolysis of N-succinyl-L,L-diaminopimelic acid (SDAP), forming succinate and LL-2,6-diaminopimelate (DAP), an intermediate involved in the bacterial biosynthesis of lysine and meso-diaminopimelic acid, an essential component of bacterial cell walls. The chain is Succinyl-diaminopimelate desuccinylase 2 from Ruegeria sp. (strain TM1040) (Silicibacter sp.).